The following is a 392-amino-acid chain: Phosphoprotein (392 aa).

2 disordered regions span residues 61 to 107 (ESTN…GLDS) and 152 to 182 (PIATSSPIDFKRGAGIPAGSIEGSTQSDGWE). The tract at residues 217–280 (LNVNEILNTV…ITTVKIMDPG (64 aa)) is multimerization. Residues 219–246 (VNEILNTVRNLDSRMNQLETKVDRILSS) are a coiled coil.

This sequence belongs to the rubulavirus/avulavirus P protein family. As to quaternary structure, homotetramer. Interacts (via multimerization domain) with polymerase L; this interaction forms the polymerase L-P complex. Interacts (via N-terminus) with N0 (via Ncore); this interaction allows P to chaperon N0 to avoid N polymerization before encapsidation. Interacts (via C-terminus) with N-RNA template; this interaction positions the polymerase on the template for both transcription and replication.

In terms of biological role, essential cofactor of the RNA polymerase L that plays a central role in the transcription and replication by forming the polymerase complex with RNA polymerase L and recruiting L to the genomic N-RNA template for RNA synthesis. Also plays a central role in the encapsidation of nascent RNA chains by forming the encapsidation complex with the nucleocapsid protein N (N-P complex). Acts as a chaperone for newly synthesized free N protein, so-called N0, allowing encapsidation of nascent RNA chains during replication. The nucleoprotein protein N prevents excessive phosphorylation of P, which leads to down-regulation of viral transcription/ replication. Participates, together with N, in the formation of viral factories (viroplasms), which are large inclusions in the host cytoplasm where replication takes place. In Canis lupus familiaris (Dog), this protein is Phosphoprotein (P/V).